Reading from the N-terminus, the 609-residue chain is MKVINLFASSIITTLSMLTLPIVLTSTSIYKNKLYPQYVKTTISYAFMISMIPTTMFIYSGQEMIISNWHWMTIQTMKLTLSFKLDHFSMIFVPVALFVTWSIMEFSMWYMHSDPFINRFFKYLLMFLITMMILVTANNLFQLFIGWEGVGIMSFLLIGWWHGRTDANTAALQAVLYNRIGDVGFIMAMAWFLINLNTWELQQIFISHHNNLNMPLMGLLLAATGKSAQFGLHPWLPSAMEGPTPVSALLHSSTMVVAGVFLLIRFHPLMEHNTMMQTTTLCLGAITTLFTAICALTQNDIKKIIAFSTSSQLGLMIVTIGINQPHLAFLHICTHAFFKAMLFMCSGSIIHNLNDEQDIRKMGGLYKVLPFTTTSLIVGSLALTGMPFLTGFYSKDLIIETANTSYTNAWALLLTLVATSMTAAYSTRIMFFTLLGQPRFNPMITINENSPLLINSIKRLLLGSIFAGYLISYNITPTSTPQMTMPYYLKLTALTVTLLGFILALELNLTSQSLKLKYPSNLFKFSSLLGYFPTIIHRYMPMVNLSASQKLASTLLDAIWLESALPKSISYFHMKSSVTISNQKGLIKLYFLSFIITLILALMMINSHE.

16 helical membrane passes run 3–23 (VINLFASSIITTLSMLTLPIV), 46–66 (AFMISMIPTTMFIYSGQEMII), 90–110 (MIFVPVALFVTWSIMEFSMWY), 115–135 (PFINRFFKYLLMFLITMMILV), 140–160 (LFQLFIGWEGVGIMSFLLIGW), 174–194 (AVLYNRIGDVGFIMAMAWFLI), 216–236 (LMGLLLAATGKSAQFGLHPWL), 244–264 (TPVSALLHSSTMVVAGVFLLI), 276–296 (MQTTTLCLGAITTLFTAICAL), 304–323 (IIAFSTSSQLGLMIVTIGIN), 328–350 (AFLHICTHAFFKAMLFMCSGSII), 368–388 (VLPFTTTSLIVGSLALTGMPF), 410–432 (WALLLTLVATSMTAAYSTRIMFF), 460–480 (LLLGSIFAGYLISYNITPTST), 485–505 (MPYYLKLTALTVTLLGFILAL), and 585–605 (GLIKLYFLSFIITLILALMMI).

This sequence belongs to the complex I subunit 5 family.

It is found in the mitochondrion inner membrane. The enzyme catalyses a ubiquinone + NADH + 5 H(+)(in) = a ubiquinol + NAD(+) + 4 H(+)(out). Its function is as follows. Core subunit of the mitochondrial membrane respiratory chain NADH dehydrogenase (Complex I) that is believed to belong to the minimal assembly required for catalysis. Complex I functions in the transfer of electrons from NADH to the respiratory chain. The immediate electron acceptor for the enzyme is believed to be ubiquinone. This Phoca vitulina (Harbor seal) protein is NADH-ubiquinone oxidoreductase chain 5 (MT-ND5).